We begin with the raw amino-acid sequence, 243 residues long: Protein-L-isoaspartate O-methyltransferase (243 aa).

The active site involves Ser87.

It belongs to the methyltransferase superfamily. L-isoaspartyl/D-aspartyl protein methyltransferase family.

Its subcellular location is the cytoplasm. The catalysed reaction is [protein]-L-isoaspartate + S-adenosyl-L-methionine = [protein]-L-isoaspartate alpha-methyl ester + S-adenosyl-L-homocysteine. Its function is as follows. Catalyzes the methyl esterification of L-isoaspartyl residues in peptides and proteins that result from spontaneous decomposition of normal L-aspartyl and L-asparaginyl residues. It plays a role in the repair and/or degradation of damaged proteins. This chain is Protein-L-isoaspartate O-methyltransferase, found in Methanosarcina mazei (strain ATCC BAA-159 / DSM 3647 / Goe1 / Go1 / JCM 11833 / OCM 88) (Methanosarcina frisia).